Reading from the N-terminus, the 365-residue chain is UDP-N-acetylglucosamine--N-acetylmuramyl-(pentapeptide) pyrophosphoryl-undecaprenol N-acetylglucosamine transferase (365 aa).

UDP-N-acetyl-alpha-D-glucosamine contacts are provided by residues 17–19, N129, R167, S194, I250, 269–274, and Q295; these read TGG and ALTVSE.

It belongs to the glycosyltransferase 28 family. MurG subfamily.

Its subcellular location is the cell inner membrane. It catalyses the reaction di-trans,octa-cis-undecaprenyl diphospho-N-acetyl-alpha-D-muramoyl-L-alanyl-D-glutamyl-meso-2,6-diaminopimeloyl-D-alanyl-D-alanine + UDP-N-acetyl-alpha-D-glucosamine = di-trans,octa-cis-undecaprenyl diphospho-[N-acetyl-alpha-D-glucosaminyl-(1-&gt;4)]-N-acetyl-alpha-D-muramoyl-L-alanyl-D-glutamyl-meso-2,6-diaminopimeloyl-D-alanyl-D-alanine + UDP + H(+). The protein operates within cell wall biogenesis; peptidoglycan biosynthesis. In terms of biological role, cell wall formation. Catalyzes the transfer of a GlcNAc subunit on undecaprenyl-pyrophosphoryl-MurNAc-pentapeptide (lipid intermediate I) to form undecaprenyl-pyrophosphoryl-MurNAc-(pentapeptide)GlcNAc (lipid intermediate II). The polypeptide is UDP-N-acetylglucosamine--N-acetylmuramyl-(pentapeptide) pyrophosphoryl-undecaprenol N-acetylglucosamine transferase (Shewanella piezotolerans (strain WP3 / JCM 13877)).